The chain runs to 145 residues: MILWRISAYADLSGTGGLRVSGRWHQAGRPVVYAATSPPGAMLEVLVHLEIDPEDFPTTMRLLRIELPDTVSQAQLPALQPGWSAQPELTRTLGNRFLDDCSALLLPVPSAIMPSTTNYLFNPRHPQAQSAKIQVEDFTPDSRLF.

The protein belongs to the MbcT/ParT/Res family. Homodimer. Forms a complex with cognate antitoxin Xre; the 2 toxin molecules dimerize and each contacts an Xre homodimer. Most Res-Xre contacts are between the antitoxin molecule closest to the toxin.

Toxic component of a type II toxin-antitoxin (TA) system. Expression in E.coli inhibits cell growth. In vivo it is probably neutralized by cognate antitoxin Xre; this has not been shown upon expression in E.coli. Probably depletes intracellular NAD(+). The sequence is that of Toxin Res from Pseudomonas putida (strain ATCC 47054 / DSM 6125 / CFBP 8728 / NCIMB 11950 / KT2440).